Reading from the N-terminus, the 221-residue chain is Small ribosomal subunit protein uS5 (221 aa).

One can recognise an S5 DRBM domain in the interval Leu46 to Ile109.

Belongs to the universal ribosomal protein uS5 family. Part of the 30S ribosomal subunit. Contacts protein S4.

With S4 and S12 plays an important role in translational accuracy. This chain is Small ribosomal subunit protein uS5, found in Picrophilus torridus (strain ATCC 700027 / DSM 9790 / JCM 10055 / NBRC 100828 / KAW 2/3).